The sequence spans 124 residues: Small ribosomal subunit protein uS12c (124 aa).

The protein belongs to the universal ribosomal protein uS12 family. Part of the 30S ribosomal subunit.

It is found in the plastid. It localises to the chloroplast. With S4 and S5 plays an important role in translational accuracy. Located at the interface of the 30S and 50S subunits. The chain is Small ribosomal subunit protein uS12c (rps12) from Cyanidium caldarium (Red alga).